A 252-amino-acid chain; its full sequence is 5-oxoprolinase subunit A (252 aa).

The protein belongs to the LamB/PxpA family. As to quaternary structure, forms a complex composed of PxpA, PxpB and PxpC.

The catalysed reaction is 5-oxo-L-proline + ATP + 2 H2O = L-glutamate + ADP + phosphate + H(+). Functionally, catalyzes the cleavage of 5-oxoproline to form L-glutamate coupled to the hydrolysis of ATP to ADP and inorganic phosphate. The sequence is that of 5-oxoprolinase subunit A from Chloroflexus aggregans (strain MD-66 / DSM 9485).